The sequence spans 945 residues: Isoleucine--tRNA ligase 1 (945 aa).

The 'HIGH' region signature appears at 66-76 (PYANGDIHLGH). Residue E581 coordinates L-isoleucyl-5'-AMP. The 'KMSKS' region signature appears at 622 to 626 (KMSKS). Residue K625 coordinates ATP. Zn(2+)-binding residues include C908, C911, C928, and C931.

The protein belongs to the class-I aminoacyl-tRNA synthetase family. IleS type 1 subfamily. As to quaternary structure, monomer. Zn(2+) is required as a cofactor.

It is found in the cytoplasm. The catalysed reaction is tRNA(Ile) + L-isoleucine + ATP = L-isoleucyl-tRNA(Ile) + AMP + diphosphate. Catalyzes the attachment of isoleucine to tRNA(Ile). As IleRS can inadvertently accommodate and process structurally similar amino acids such as valine, to avoid such errors it has two additional distinct tRNA(Ile)-dependent editing activities. One activity is designated as 'pretransfer' editing and involves the hydrolysis of activated Val-AMP. The other activity is designated 'posttransfer' editing and involves deacylation of mischarged Val-tRNA(Ile). This chain is Isoleucine--tRNA ligase 1, found in Burkholderia pseudomallei (strain K96243).